A 193-amino-acid polypeptide reads, in one-letter code: Ribosome maturation factor RimM (193 aa).

A PRC barrel domain is found at 97–172 (DDEFYLTDLV…LILADPPALV (76 aa)). Residues 168-193 (PPALVGDHEGPEEKGLDENEELGDRD) form a disordered region. The span at 173 to 193 (GDHEGPEEKGLDENEELGDRD) shows a compositional bias: basic and acidic residues.

Belongs to the RimM family. Binds ribosomal protein uS19.

The protein resides in the cytoplasm. Its function is as follows. An accessory protein needed during the final step in the assembly of 30S ribosomal subunit, possibly for assembly of the head region. Essential for efficient processing of 16S rRNA. May be needed both before and after RbfA during the maturation of 16S rRNA. It has affinity for free ribosomal 30S subunits but not for 70S ribosomes. This is Ribosome maturation factor RimM from Caulobacter vibrioides (strain ATCC 19089 / CIP 103742 / CB 15) (Caulobacter crescentus).